A 609-amino-acid chain; its full sequence is UvrABC system protein C (609 aa).

One can recognise a GIY-YIG domain in the interval 16-94 (SSPGVYRMYD…IKQYMPKYNV (79 aa)). One can recognise a UVR domain in the interval 203-238 (QQVTKALVAKMEQAAVELNYEQAARYRDQITALRRV).

This sequence belongs to the UvrC family. As to quaternary structure, interacts with UvrB in an incision complex.

Its subcellular location is the cytoplasm. In terms of biological role, the UvrABC repair system catalyzes the recognition and processing of DNA lesions. UvrC both incises the 5' and 3' sides of the lesion. The N-terminal half is responsible for the 3' incision and the C-terminal half is responsible for the 5' incision. The chain is UvrABC system protein C from Shewanella piezotolerans (strain WP3 / JCM 13877).